A 324-amino-acid chain; its full sequence is Aspartate carbamoyltransferase catalytic subunit (324 aa).

Arg-65 and Thr-66 together coordinate carbamoyl phosphate. Residue Lys-93 coordinates L-aspartate. The carbamoyl phosphate site is built by Arg-115, His-145, and Gln-148. L-aspartate is bound by residues Arg-178 and Arg-233. Carbamoyl phosphate contacts are provided by Gly-274 and Pro-275.

This sequence belongs to the aspartate/ornithine carbamoyltransferase superfamily. ATCase family. As to quaternary structure, heterododecamer (2C3:3R2) of six catalytic PyrB chains organized as two trimers (C3), and six regulatory PyrI chains organized as three dimers (R2).

The enzyme catalyses carbamoyl phosphate + L-aspartate = N-carbamoyl-L-aspartate + phosphate + H(+). The protein operates within pyrimidine metabolism; UMP biosynthesis via de novo pathway; (S)-dihydroorotate from bicarbonate: step 2/3. Catalyzes the condensation of carbamoyl phosphate and aspartate to form carbamoyl aspartate and inorganic phosphate, the committed step in the de novo pyrimidine nucleotide biosynthesis pathway. The chain is Aspartate carbamoyltransferase catalytic subunit from Nitrosococcus oceani (strain ATCC 19707 / BCRC 17464 / JCM 30415 / NCIMB 11848 / C-107).